The sequence spans 274 residues: Diaminopimelate epimerase (274 aa).

3 residues coordinate substrate: asparagine 11, glutamine 44, and asparagine 64. Residue cysteine 73 is the Proton donor of the active site. Substrate-binding positions include 74–75 (GN), asparagine 157, asparagine 190, and 208–209 (ER). Residue cysteine 217 is the Proton acceptor of the active site. Substrate is bound at residue 218-219 (GS).

It belongs to the diaminopimelate epimerase family. As to quaternary structure, homodimer.

The protein resides in the cytoplasm. The catalysed reaction is (2S,6S)-2,6-diaminopimelate = meso-2,6-diaminopimelate. It participates in amino-acid biosynthesis; L-lysine biosynthesis via DAP pathway; DL-2,6-diaminopimelate from LL-2,6-diaminopimelate: step 1/1. Its function is as follows. Catalyzes the stereoinversion of LL-2,6-diaminopimelate (L,L-DAP) to meso-diaminopimelate (meso-DAP), a precursor of L-lysine and an essential component of the bacterial peptidoglycan. This chain is Diaminopimelate epimerase, found in Edwardsiella ictaluri (strain 93-146).